Here is a 20-residue protein sequence, read N- to C-terminus: Cytochrome P450-RR1 (20 aa).

This sequence belongs to the cytochrome P450 family. The cofactor is heme.

P450-RRI catalyzes the O-dealkylation of 2-ethoxyphenol and 2-methoxyphenol to produce catechol. The cytochrome binds other ortho-substituted phenols, including 2-ethoxyphenol, 2-methylphenol and 2-chlorophenol. The chain is Cytochrome P450-RR1 from Rhodococcus rhodochrous.